The sequence spans 120 residues: Crustacean hyperglycemic hormones 1 (120 aa).

The first 27 residues, methionine 1–alanine 27, serve as a signal peptide directing secretion. Intrachain disulfides connect cysteine 53–cysteine 89, cysteine 69–cysteine 85, and cysteine 72–cysteine 98. Residue valine 118 is modified to Valine amide.

Belongs to the arthropod CHH/MIH/GIH/VIH hormone family.

It localises to the secreted. In terms of biological role, hormone found in the sinus gland of isopods and decapods which controls the blood sugar level. Has a secretagogue action over the amylase released from the midgut gland. May act as a stress hormone and may be involved in the control of molting and reproduction. This Penaeus monodon (Giant tiger prawn) protein is Crustacean hyperglycemic hormones 1 (CHH1).